A 629-amino-acid polypeptide reads, in one-letter code: Polyadenylate-binding protein, cytoplasmic and nuclear (629 aa).

Polar residues predominate over residues 1–11 (MSAAETNQLQE). Residues 1–48 (MSAAETNQLQESMEKLNIGSTTEEQSAAAATTTADQSAEEQGESSGVA) are disordered. Low complexity predominate over residues 20-36 (STTEEQSAAAATTTADQ). RRM domains lie at 52 to 130 (ASLY…WSQR), 140 to 217 (GNIF…KHIS), 233 to 310 (TNIY…RAQK), and 336 to 413 (VNLF…LAQR). The disordered stretch occupies residues 503 to 534 (PPQFQQDFNGQNMRPQQQQQQQPRGGYYPNRN). Positions 505-517 (QFQQDFNGQNMRP) are enriched in polar residues. A PABC domain is found at 537–618 (SKRDLAAIIS…ALTAFEEYKK (82 aa)).

Belongs to the polyadenylate-binding protein type-1 family.

The protein resides in the cytoplasm. It localises to the nucleus. Functionally, binds the poly(A) tail of mRNA. Appears to be an important mediator of the multiple roles of the poly(A) tail in mRNA biogenesis, stability and translation. In the nucleus, involved in both mRNA cleavage and polyadenylation. Is also required for efficient mRNA export to the cytoplasm. Acts in concert with a poly(A)-specific nuclease (PAN) to affect poly(A) tail shortening, which may occur concomitantly with either nucleocytoplasmic mRNA transport or translational initiation. In the cytoplasm, stimulates translation initiation and regulates mRNA decay through translation termination-coupled poly(A) shortening, probably mediated by PAN. This is Polyadenylate-binding protein, cytoplasmic and nuclear (PAB1) from Candida albicans (strain SC5314 / ATCC MYA-2876) (Yeast).